An 83-amino-acid chain; its full sequence is U5-theraphotoxin-Hs1d (83 aa).

Positions 1 to 21 are cleaved as a signal peptide; that stretch reads MKTSMFLTLTGLVLLFVVCYA. A propeptide spanning residues 22-49 is cleaved from the precursor; that stretch reads SESEEKEFPKELLSSIFAADSDFKVEER. Disulfide bonds link C51/C63, C56/C68, and C62/C75.

This sequence belongs to the neurotoxin 10 (Hwtx-1) family. 51 (Hntx-8) subfamily. Hntx-8 sub-subfamily. In terms of tissue distribution, expressed by the venom gland.

The protein localises to the secreted. Functionally, agglutinates erythrocytes. The protein is U5-theraphotoxin-Hs1d of Cyriopagopus schmidti (Chinese bird spider).